A 717-amino-acid polypeptide reads, in one-letter code: Eukaryotic translation initiation factor 3 subunit B (717 aa).

The tract at residues methionine 1–methionine 89 is sufficient for interaction with HCR1 and TIF32. The segment at methionine 1–tryptophan 216 is sufficient for interaction with PIC8. The 88-residue stretch at serine 28–glutamate 115 folds into the RRM domain. 6 WD repeats span residues arginine 183 to cysteine 221, phenylalanine 223 to threonine 284, glycine 293 to lysine 332, glutamate 445 to threonine 484, phenylalanine 506 to histidine 549, and serine 564 to glutamate 609.

It belongs to the eIF-3 subunit B family. Component of the eukaryotic translation initiation factor 3 (eIF-3) complex.

Its subcellular location is the cytoplasm. RNA-binding component of the eukaryotic translation initiation factor 3 (eIF-3) complex, which is involved in protein synthesis of a specialized repertoire of mRNAs and, together with other initiation factors, stimulates binding of mRNA and methionyl-tRNAi to the 40S ribosome. The eIF-3 complex specifically targets and initiates translation of a subset of mRNAs involved in cell proliferation. In Yarrowia lipolytica (strain CLIB 122 / E 150) (Yeast), this protein is Eukaryotic translation initiation factor 3 subunit B.